Here is a 282-residue protein sequence, read N- to C-terminus: Putative sugar uptake protein lp_2594 (282 aa).

Transmembrane regions (helical) follow at residues 2-21 (IFLI…LLVG), 31-48 (MFGM…FWLF), 53-75 (VTIS…IGQL), 90-112 (MPIS…FGEW), 119-136 (ILGL…ALSA), 146-163 (FSCY…WIYS), 176-194 (LFLP…WAIY), 209-226 (TLPG…ILSA), 233-252 (NAYI…GLFF), and 262-281 (IVSV…TTAL).

It belongs to the GRP transporter (TC 2.A.7.5) family.

Its subcellular location is the cell membrane. The sequence is that of Putative sugar uptake protein lp_2594 from Lactiplantibacillus plantarum (strain ATCC BAA-793 / NCIMB 8826 / WCFS1) (Lactobacillus plantarum).